Consider the following 306-residue polypeptide: Protein-L-isoaspartate O-methyltransferase 2 (306 aa).

The segment at M1–G82 is disordered. Positions P38–P48 are enriched in pro residues. The span at P54 to T77 shows a compositional bias: low complexity. S142 is an active-site residue.

It belongs to the methyltransferase superfamily. L-isoaspartyl/D-aspartyl protein methyltransferase family.

It is found in the cytoplasm. The catalysed reaction is [protein]-L-isoaspartate + S-adenosyl-L-methionine = [protein]-L-isoaspartate alpha-methyl ester + S-adenosyl-L-homocysteine. Its function is as follows. Catalyzes the methyl esterification of L-isoaspartyl residues in peptides and proteins that result from spontaneous decomposition of normal L-aspartyl and L-asparaginyl residues. It plays a role in the repair and/or degradation of damaged proteins. The polypeptide is Protein-L-isoaspartate O-methyltransferase 2 (Cupriavidus necator (strain ATCC 17699 / DSM 428 / KCTC 22496 / NCIMB 10442 / H16 / Stanier 337) (Ralstonia eutropha)).